Reading from the N-terminus, the 867-residue chain is Xylosyltransferase 2 (867 aa).

Residues 1-15 lie on the Cytoplasmic side of the membrane; the sequence is MVASARVQKLVRRYK. A helical; Signal-anchor for type II membrane protein transmembrane segment spans residues 16-36; sequence LAIATALAILLLQGLVVWSFS. The Lumenal portion of the chain corresponds to 37-867; sequence VLEDDEPGEK…GPVKADGRLR (831 aa). The segment at 41–122 is disordered; sequence DEPGEKGRQK…PPPEAPGRQN (82 aa). The segment covering 53 to 65 has biased composition (basic and acidic residues); it reads RPLDPSEGSKDTD. The span at 73 to 82 shows a compositional bias: basic residues; that stretch reads SAGRRHGRWR. Asparagine 122 carries N-linked (GlcNAc...) asparagine glycosylation. Cystine bridges form between cysteine 161–cysteine 189 and cysteine 205–cysteine 447. UDP-alpha-D-xylose-binding positions include valine 238, aspartate 266, and 295 to 297; that span reads TIW. Asparagine 326 carries an N-linked (GlcNAc...) asparagine glycan. UDP-alpha-D-xylose contacts are provided by residues 399–400, serine 480, and 503–504; these read DW and RK. 2 cysteine pairs are disulfide-bonded: cysteine 580–cysteine 835 and cysteine 828–cysteine 841. An N-linked (GlcNAc...) asparagine glycan is attached at asparagine 685.

The protein belongs to the glycosyltransferase 14 family. XylT subfamily. As to quaternary structure, monomer. Requires Mg(2+) as cofactor. Mn(2+) is required as a cofactor. In terms of processing, contains disulfide bonds.

Its subcellular location is the golgi apparatus membrane. The protein localises to the secreted. The enzyme catalyses UDP-alpha-D-xylose + L-seryl-[protein] = 3-O-(beta-D-xylosyl)-L-seryl-[protein] + UDP + H(+). It participates in glycan metabolism; chondroitin sulfate biosynthesis. Its pathway is glycan metabolism; heparan sulfate biosynthesis. Its function is as follows. Catalyzes the first step in the biosynthesis of chondroitin sulfate, heparan sulfate and dermatan sulfate proteoglycans, such as DCN. Transfers D-xylose from UDP-D-xylose to specific serine residues of the core protein. The protein is Xylosyltransferase 2 (XYLT2) of Bos taurus (Bovine).